The chain runs to 273 residues: Putative carboxypeptidase YodJ (273 aa).

A signal peptide spans 1-23 (MKKSGKWFSLAAALSVTAIVGAG). Residue Cys-24 is the site of N-palmitoyl cysteine attachment. Cys-24 carries the S-diacylglycerol cysteine lipid modification. The interval 27–58 (SNGDAQKDTKTTAETKQTEQKTADSKKSNTQN) is disordered. Over residues 31–53 (AQKDTKTTAETKQTEQKTADSKK) the composition is skewed to basic and acidic residues.

The protein belongs to the peptidase M15B family.

Its subcellular location is the cell membrane. This chain is Putative carboxypeptidase YodJ (yodJ), found in Bacillus subtilis (strain 168).